A 144-amino-acid chain; its full sequence is Bacilliredoxin BCE33L1972 (144 aa).

Belongs to the bacilliredoxin family.

The protein is Bacilliredoxin BCE33L1972 of Bacillus cereus (strain ZK / E33L).